Consider the following 137-residue polypeptide: Peptide methionine sulfoxide reductase MsrB (137 aa).

The MsrB domain occupies 9–131; the sequence is DAEWRAMLDD…NSASLRFDAT (123 aa). Zn(2+)-binding residues include C48, C51, C97, and C100. C120 (nucleophile) is an active-site residue.

It belongs to the MsrB Met sulfoxide reductase family. Zn(2+) serves as cofactor.

The enzyme catalyses L-methionyl-[protein] + [thioredoxin]-disulfide + H2O = L-methionyl-(R)-S-oxide-[protein] + [thioredoxin]-dithiol. The sequence is that of Peptide methionine sulfoxide reductase MsrB from Herminiimonas arsenicoxydans.